Here is a 508-residue protein sequence, read N- to C-terminus: Light-independent protochlorophyllide reductase subunit B (508 aa).

Aspartate 36 contributes to the [4Fe-4S] cluster binding site. The active-site Proton donor is the aspartate 282. Glycine 417 to leucine 418 lines the substrate pocket.

This sequence belongs to the ChlB/BchB/BchZ family. Protochlorophyllide reductase is composed of three subunits; BchL, BchN and BchB. Forms a heterotetramer of two BchB and two BchN subunits. [4Fe-4S] cluster is required as a cofactor.

The enzyme catalyses chlorophyllide a + oxidized 2[4Fe-4S]-[ferredoxin] + 2 ADP + 2 phosphate = protochlorophyllide a + reduced 2[4Fe-4S]-[ferredoxin] + 2 ATP + 2 H2O. It participates in porphyrin-containing compound metabolism; bacteriochlorophyll biosynthesis (light-independent). Functionally, component of the dark-operative protochlorophyllide reductase (DPOR) that uses Mg-ATP and reduced ferredoxin to reduce ring D of protochlorophyllide (Pchlide) to form chlorophyllide a (Chlide). This reaction is light-independent. The NB-protein (BchN-BchB) is the catalytic component of the complex. In Methylocella silvestris (strain DSM 15510 / CIP 108128 / LMG 27833 / NCIMB 13906 / BL2), this protein is Light-independent protochlorophyllide reductase subunit B.